The chain runs to 837 residues: Tuftelin-interacting protein 11 (837 aa).

2 stretches are compositionally biased toward basic and acidic residues: residues 1-13 (MSLS…GEGR) and 53-64 (VWAERDSDDERP). Disordered stretches follow at residues 1–21 (MSLS…DDER), 53–72 (VWAE…KRAR), and 85–133 (LKKG…KGFA). Phosphoserine occurs at positions 2, 59, and 98. The span at 91–102 (EEAELEDSDDEE) shows a compositional bias: acidic residues. The segment covering 103–116 (RPVKQDDFPKDFGP) has biased composition (basic and acidic residues). At Ser-144 the chain carries Phosphoserine. Residues 149–195 (TKGIGQKLLQKMGYVPGRGLGKNAQGIINPIEAKQRKGKGAVGAYGS) form the G-patch domain. A disordered region spans residues 179 to 236 (IEAKQRKGKGAVGAYGSERTTQSMQDFPVVDSEEEAEEEFQKGLSQWRKDPSGSKKKP). Ser-210 carries the phosphoserine modification. The short motif at 700-705 (VKDKFN) is the Nuclear localization signal element. Residues 710-734 (IMNRAVSSNVGAYMQPGARENIAYL) are required for nuclear speckle localization.

This sequence belongs to the TFP11/STIP family. As to quaternary structure, identified in the spliceosome C complex. Found in the Intron Large (IL) complex, a post-mRNA release spliceosomal complex containing the excised intron, U2, U5 and U6 snRNPs, and splicing factors. Interacts with TUFT1. Interacts with DHX15; indicative for a recruitment of DHX15 to the IL complex. Interacts with GCFC2.

It localises to the cytoplasm. Its subcellular location is the nucleus. Its function is as follows. Involved in pre-mRNA splicing, specifically in spliceosome disassembly during late-stage splicing events. Intron turnover seems to proceed through reactions in two lariat-intron associated complexes termed Intron Large (IL) and Intron Small (IS). In cooperation with DHX15 seems to mediate the transition of the U2, U5 and U6 snRNP-containing IL complex to the snRNP-free IS complex leading to efficient debranching and turnover of excised introns. May play a role in the differentiation of ameloblasts and odontoblasts or in the forming of the enamel extracellular matrix. The protein is Tuftelin-interacting protein 11 (TFIP11) of Macaca fascicularis (Crab-eating macaque).